The following is a 79-amino-acid chain: Protein GOLVEN 2 (79 aa).

The N-terminal stretch at 1-26 is a signal peptide; that stretch reads MAIRVSHKSFLVALLLILFISSPTQA. The propeptide occupies 27–65; the sequence is RSLREVVRNRTLLVVEKSQESRKIRHEGGGSDVDGLMDM. A disordered region spans residues 49–79; the sequence is KIRHEGGGSDVDGLMDMDYNSANKKRPIHNR. Tyrosine 67 is subject to Sulfotyrosine. Proline 75 bears the Hydroxyproline mark.

It belongs to the RGF family. As to quaternary structure, binds to LRR receptor-like serine/threonine-protein kinases to trigger their dimerization with SERK proteins and subsequent signaling. As to expression, expressed in siliques, stems, hypocotyls, shoot apex, leaves, flowers and cotyledons, and, to a lower extent, in roots.

Its subcellular location is the secreted. It localises to the endoplasmic reticulum. Its function is as follows. Signaling peptide (root growth factor) that regulates the pattern of root growth and lateral root development by modulating the length and the number of cortical cells in the root apical meristem (RAM), and the anticlinal asymmetric cell divisions in lateral root initiation cells. Also involved in the regulation of hypocotyl bending and root gravitropism, probably by influencing the formation of auxin gradients. Maintains the postembryonic root stem cell niche. In Arabidopsis thaliana (Mouse-ear cress), this protein is Protein GOLVEN 2.